The chain runs to 124 residues: ATP synthase epsilon chain (124 aa).

Basic and acidic residues predominate over residues 99–118 (LEQAKTEGDAHAERRADVRL). The tract at residues 99–124 (LEQAKTEGDAHAERRADVRLRAAAGR) is disordered.

The protein belongs to the ATPase epsilon chain family. F-type ATPases have 2 components, CF(1) - the catalytic core - and CF(0) - the membrane proton channel. CF(1) has five subunits: alpha(3), beta(3), gamma(1), delta(1), epsilon(1). CF(0) has three main subunits: a, b and c.

The protein localises to the cell membrane. In terms of biological role, produces ATP from ADP in the presence of a proton gradient across the membrane. The protein is ATP synthase epsilon chain (atpC) of Streptomyces coelicolor (strain ATCC BAA-471 / A3(2) / M145).